The primary structure comprises 282 residues: tRNA N(3)-cytidine methyltransferase METTL6 (282 aa).

Residues tryptophan 45, tyrosine 49, glycine 87, aspartate 110, aspartate 136, leucine 137, and isoleucine 157 each contribute to the S-adenosyl-L-methionine site.

This sequence belongs to the methyltransferase superfamily. METL family. In terms of assembly, monomer. Interacts with SARS1/SerRS; interaction is mediated via tRNA(Ser) and is required for N(3)-methylcytidine methylation.

It is found in the cytoplasm. Its subcellular location is the nucleus. It catalyses the reaction cytidine(32) in tRNA(Ser) + S-adenosyl-L-methionine = N(3)-methylcytidine(32) in tRNA(Ser) + S-adenosyl-L-homocysteine + H(+). In terms of biological role, S-adenosyl-L-methionine-dependent methyltransferase that mediates N(3)-methylcytidine modification of residue 32 of the tRNA anticodon loop of tRNA(Ser), including tRNA(Ser)(UGA) and tRNA(Ser)(GCU). Interaction with SARS1/SerRS is required for N(3)-methylcytidine methylation. In Mus musculus (Mouse), this protein is tRNA N(3)-cytidine methyltransferase METTL6.